Reading from the N-terminus, the 266-residue chain is N-acetyltransferase ECO1 (266 aa).

The segment at 31 to 55 (KKCTECQMSYIIDSPADCAEHKKYH) adopts a CCHH-type zinc-finger fold. In terms of domain architecture, N-acetyltransferase spans 108-266 (TPGKTAEVKA…SGELLIPCYI (159 aa)).

Belongs to the acetyltransferase family. ECO subfamily.

Its subcellular location is the nucleus. Probable acetyltransferase required for the establishment of sister chromatid cohesion and couple the processes of cohesion and DNA replication to ensure that only sister chromatids become paired together. In contrast to the structural cohesins, the deposition and establishment factors are required only during S phase. Acts by acetylating the cohesin complex component SMC3. This is N-acetyltransferase ECO1 (ECO1) from Eremothecium gossypii (strain ATCC 10895 / CBS 109.51 / FGSC 9923 / NRRL Y-1056) (Yeast).